The chain runs to 247 residues: Sugar fermentation stimulation protein homolog (247 aa).

The protein belongs to the SfsA family.

The protein is Sugar fermentation stimulation protein homolog of Aeromonas salmonicida (strain A449).